A 307-amino-acid polypeptide reads, in one-letter code: 4-hydroxythreonine-4-phosphate dehydrogenase (307 aa).

Residues His121 and Thr122 each coordinate substrate. A divalent metal cation contacts are provided by His150, His189, and His246. Substrate is bound by residues Lys254, Asn263, and Arg272.

Belongs to the PdxA family. As to quaternary structure, homodimer. Requires Zn(2+) as cofactor. The cofactor is Mg(2+). Co(2+) serves as cofactor.

The protein localises to the cytoplasm. The catalysed reaction is 4-(phosphooxy)-L-threonine + NAD(+) = 3-amino-2-oxopropyl phosphate + CO2 + NADH. Its pathway is cofactor biosynthesis; pyridoxine 5'-phosphate biosynthesis; pyridoxine 5'-phosphate from D-erythrose 4-phosphate: step 4/5. In terms of biological role, catalyzes the NAD(P)-dependent oxidation of 4-(phosphooxy)-L-threonine (HTP) into 2-amino-3-oxo-4-(phosphooxy)butyric acid which spontaneously decarboxylates to form 3-amino-2-oxopropyl phosphate (AHAP). The chain is 4-hydroxythreonine-4-phosphate dehydrogenase from Campylobacter fetus subsp. fetus (strain 82-40).